Reading from the N-terminus, the 584-residue chain is Protein phosphatase 2A scaffold subunit (584 aa).

14 HEAT repeats span residues 7–45 (ESDD…ALGP), 46–84 (ERTR…FVGG), 86–123 (EHAV…EIPT), 168–206 (LRKT…VKSE), 207–239 (ILPL…MLTN), 240–278 (EENI…SMGT), 279–317 (EITK…LLTK), 318–356 (EMNI…IYGK), 358–395 (DTLT…VIGI), 397–434 (MLSQ…QLGV), 441–479 (LGNL…AKNN), 480–512 (IIPK…VVGG), 513–551 (DVIS…LLDS), and 553–584 (IVQS…LQLC).

The protein belongs to the phosphatase 2A regulatory subunit A family. In terms of assembly, component of the Sca1 complex composed of at least gefA, gefH, scaA, phr, and the protein phosphatase 2A subunits pppA and pho2B.

Its subcellular location is the cytoplasm. It is found in the cytosol. It localises to the cell membrane. Functionally, scaffolding molecule which may coordinate the assembly of the catalytic subunit and a variable regulatory B subunit. Component of the Sca1 complex, a regulator of cell motility, chemotaxis and signal relay. The Sca1 complex is recruited to the plasma membrane in a chemoattractant- and F-actin-dependent manner and is enriched at the leading edge of chemotaxing cells where it regulates F-actin dynamics and signal relay by controlling the activation of rasC and the downstream target of rapamycin complex 2 (TORC2)-Akt/protein kinase B (PKB) pathway. This chain is Protein phosphatase 2A scaffold subunit (pppA), found in Dictyostelium discoideum (Social amoeba).